We begin with the raw amino-acid sequence, 997 residues long: Chromosomal passenger complex protein bir1 (997 aa).

BIR repeat units follow at residues 25–99 (RLDT…PWAY) and 120–194 (REQT…VFFT). Zn(2+)-binding residues include cysteine 163, cysteine 166, histidine 183, and cysteine 190. Disordered stretches follow at residues 217–329 (EDLT…FSKG), 370–527 (TVSD…ENDE), 682–701 (TRDVSSPVSDEKSENVNHEE), 755–782 (SPKLQSKNNQTVEAVNTETSDKLQEKEA), and 817–838 (RTSVQNGTRSVSKNTPEKETKV). Positions 240–252 (TLNFSPSRKNNLN) are enriched in polar residues. The span at 288–299 (PRRKNKSPKKSK) shows a compositional bias: basic residues. Residues 311 to 320 (SDEDEDDDDL) show a composition bias toward acidic residues. Polar residues predominate over residues 370 to 392 (TVSDITGHQSVTDESDEQNNCMS). Residues 408 to 423 (SVVSKSKEISSSVSSV) are compositionally biased toward low complexity. The segment covering 426–451 (EQNHTEKQVAIETPEQQKVEKEDEHL) has biased composition (basic and acidic residues). 2 stretches are compositionally biased toward polar residues: residues 463-476 (KQPISSKPSTSSPD) and 485-512 (RVSSSSFRDKILQTNFSPRSTIDSFSNI). Residues 756–772 (PKLQSKNNQTVEAVNTE) show a composition bias toward polar residues. A compositionally biased stretch (basic and acidic residues) spans 773–782 (TSDKLQEKEA). Polar residues predominate over residues 817–830 (RTSVQNGTRSVSKN).

Component of the CPC complex at least composed of ark1, bir1 and pic1. Interacts with the mitotic checkpoint complex (MCC) subunit mad3. Phosphorylated by ark1.

It localises to the nucleus. It is found in the cytoplasm. Its subcellular location is the cytoskeleton. The protein resides in the spindle. The protein localises to the chromosome. It localises to the centromere. Its function is as follows. Component of the chromosomal passenger complex (CPC), a complex that acts as a key regulator of chromosome segregation and cytokinesis. Has a role in chromosome segregation by recruiting condensin and ark1 kinase to appropriate sites as the cell progresses through mitosis. Ark1 activity depends upon bir1 function and phosphorylation. Ark1 with bir1 function is required for full-scale association with kinetochores and formation of a complex with mad3. This Schizosaccharomyces pombe (strain 972 / ATCC 24843) (Fission yeast) protein is Chromosomal passenger complex protein bir1 (bir1).